Here is a 322-residue protein sequence, read N- to C-terminus: ATP-dependent 6-phosphofructokinase (322 aa).

Residues G12, 73 to 74 (RF), and 103 to 106 (GDGT) each bind ATP. D104 is a binding site for Mg(2+). 126–128 (TID) is a binding site for substrate. The active-site Proton acceptor is D128. An ADP-binding site is contributed by R155. Substrate contacts are provided by residues R163 and 170 to 172 (MGR). ADP contacts are provided by residues 186–188 (GSE), K212, and 214–216 (KPS). Residues E223, R245, and 251-254 (HTQR) each bind substrate.

It belongs to the phosphofructokinase type A (PFKA) family. ATP-dependent PFK group I subfamily. Prokaryotic clade 'B1' sub-subfamily. In terms of assembly, homotetramer. Requires Mg(2+) as cofactor.

It is found in the cytoplasm. It catalyses the reaction beta-D-fructose 6-phosphate + ATP = beta-D-fructose 1,6-bisphosphate + ADP + H(+). It participates in carbohydrate degradation; glycolysis; D-glyceraldehyde 3-phosphate and glycerone phosphate from D-glucose: step 3/4. With respect to regulation, allosterically activated by ADP and other diphosphonucleosides, and allosterically inhibited by phosphoenolpyruvate. Functionally, catalyzes the phosphorylation of D-fructose 6-phosphate to fructose 1,6-bisphosphate by ATP, the first committing step of glycolysis. This is ATP-dependent 6-phosphofructokinase from Mesomycoplasma hyopneumoniae (strain 7448) (Mycoplasma hyopneumoniae).